The chain runs to 405 residues: Phosphoglycerate kinase (405 aa).

Residues 24-26 (DFN), arginine 40, 63-66 (HLGR), arginine 122, and arginine 162 each bind substrate. ATP-binding positions include lysine 212, glutamate 331, and 361 to 364 (GGDS).

It belongs to the phosphoglycerate kinase family. As to quaternary structure, monomer.

It is found in the cytoplasm. It carries out the reaction (2R)-3-phosphoglycerate + ATP = (2R)-3-phospho-glyceroyl phosphate + ADP. The protein operates within carbohydrate degradation; glycolysis; pyruvate from D-glyceraldehyde 3-phosphate: step 2/5. This chain is Phosphoglycerate kinase, found in Corynebacterium efficiens (strain DSM 44549 / YS-314 / AJ 12310 / JCM 11189 / NBRC 100395).